Reading from the N-terminus, the 314-residue chain is Olfactory receptor 1Q1 (314 aa).

Residues 1-25 (MDNSNWTSVSHFVLLGISTHPEEQI) lie on the Extracellular side of the membrane. N-linked (GlcNAc...) asparagine glycosylation occurs at Asn5. Residues 26–49 (PLFLVFSLMYAINISGNLAIITLI) traverse the membrane as a helical segment. The Cytoplasmic segment spans residues 50–57 (LSAPRLHI). Residues 58–79 (PMYIFLSNLALTDICFTSTTVP) form a helical membrane-spanning segment. Residues 80-100 (KMLQIIFSPTKVISYTGCLAQ) lie on the Extracellular side of the membrane. Cys97 and Cys189 are disulfide-bonded. Residues 101 to 120 (TYFFICFAVMENFILAVMAY) traverse the membrane as a helical segment. Residues 121-139 (DRYIAICHPFHYTMILTRM) lie on the Cytoplasmic side of the membrane. Residues 140–158 (LCVKMVVMCHALSHLHAML) form a helical membrane-spanning segment. The Extracellular portion of the chain corresponds to 159–195 (HTFLIGQLIFCADNRIPHFFCDLYALMKISCTSTYLN). A helical membrane pass occupies residues 196-219 (TLMIHTEGAVVISGALAFITASYA). Topologically, residues 220–236 (CIILVVLRIPSAKGRWK) are cytoplasmic. The helical transmembrane segment at 237 to 259 (TFSTCGSHLTVVAIFYGTLSWVY) threads the bilayer. Topologically, residues 260–272 (FRPLSSYSVTKGR) are extracellular. Residues 273 to 292 (IITVVYTVVTPMLNPFIYSL) form a helical membrane-spanning segment. The Cytoplasmic segment spans residues 293–314 (RNGDVKGGFMKWMSRMQTFFFR).

Belongs to the G-protein coupled receptor 1 family.

It localises to the cell membrane. Its function is as follows. Odorant receptor. The polypeptide is Olfactory receptor 1Q1 (OR1Q1) (Homo sapiens (Human)).